The sequence spans 479 residues: Anaerobic nitric oxide reductase flavorubredoxin (479 aa).

The interval 30-210 (LRGSSYNSYL…PFSRLVTPKI (181 aa)) is zinc metallo-hydrolase. 6 residues coordinate Fe cation: His79, Glu81, Asp83, His147, Asp166, and His227. The region spanning 254 to 393 (ITIFYDTMSN…LCREHGREIA (140 aa)) is the Flavodoxin-like domain. Residues 260–264 (TMSNN) and 342–369 (AFGSHGWSGGAVDRLSTRLQDAGFEMSL) each bind FMN. Residues 423–474 (GPRMQCSVCQWIYDPAKGEPMQDVAPGTPWSEVPDNFLCPECSLGKDVFEEL) form the Rubredoxin-like domain. Cys428, Cys431, Cys461, and Cys464 together coordinate Fe cation.

This sequence in the N-terminal section; belongs to the zinc metallo-hydrolase group 3 family. As to quaternary structure, homotetramer. Fe cation is required as a cofactor. FMN serves as cofactor.

The protein resides in the cytoplasm. It participates in nitrogen metabolism; nitric oxide reduction. Its function is as follows. Anaerobic nitric oxide reductase; uses NADH to detoxify nitric oxide (NO), protecting several 4Fe-4S NO-sensitive enzymes. Has at least 2 reductase partners, only one of which (NorW, flavorubredoxin reductase) has been identified. NO probably binds to the di-iron center; electrons enter from the NorW at rubredoxin and are transferred sequentially to the FMN center and the di-iron center. Also able to function as an aerobic oxygen reductase. The polypeptide is Anaerobic nitric oxide reductase flavorubredoxin (Escherichia coli O139:H28 (strain E24377A / ETEC)).